Here is a 500-residue protein sequence, read N- to C-terminus: Protein farnesyltransferase subunit beta (500 aa).

The tract at residues L117–G140 is disordered. Low complexity predominate over residues N119 to Q133. PFTB repeat units follow at residues D121–G162, R172–N213, E220–N261, M268–Q309, and Q343–Q384. Residues H246–Y249 and R288–K291 each bind (2E,6E)-farnesyl diphosphate. Residues D294 and C296 each contribute to the Zn(2+) site. Position 297-300 (Y297–W300) interacts with (2E,6E)-farnesyl diphosphate. H372 lines the Zn(2+) pocket. The segment at F402–L451 is disordered. The segment covering S420–N449 has biased composition (low complexity).

This sequence belongs to the protein prenyltransferase subunit beta family. In terms of assembly, heterodimer of fntA and fntB (farnesyltransferase). Heterodimer of an alpha and a beta subunit. Zn(2+) serves as cofactor.

It catalyses the reaction L-cysteinyl-[protein] + (2E,6E)-farnesyl diphosphate = S-(2E,6E)-farnesyl-L-cysteinyl-[protein] + diphosphate. Functionally, catalyzes the transfer of a farnesyl moiety from farnesyl diphosphate to a cysteine at the fourth position from the C-terminus of several proteins. The beta subunit is responsible for peptide-binding. This Dictyostelium discoideum (Social amoeba) protein is Protein farnesyltransferase subunit beta (fntB).